A 495-amino-acid polypeptide reads, in one-letter code: Protein painting of fourth (495 aa).

The segment at 1-51 (MDSKRAALESGDGPDAKRLDTTDDQDKEASGGDGSQVMLAKHVAPYTGHGC) is disordered. The RRM domain occupies 215–289 (CSLYVGNIPF…RTLTVRYRRL (75 aa)). The span at 332-342 (ISDSDNCSDSS) shows a compositional bias: low complexity. Disordered stretches follow at residues 332 to 358 (ISDS…INEQ), 432 to 451 (PVPA…KKAK), and 461 to 495 (GPFR…DPDP). Over residues 345-358 (GKEDGKRKKKINEQ) the composition is skewed to basic and acidic residues. The Bipartite nuclear localization signal signature appears at 351–367 (RKKKINEQEREIEKLKR). Residues 472–495 (TADEYEKDDRLEELYAQLERDPDP) are compositionally biased toward basic and acidic residues.

As to quaternary structure, interacts with Zeste. In terms of tissue distribution, weakly expressed in embryos. Expression increases during larval and pupal stages. In adults, it is predominantly expressed in males, while it is weakly expressed in females.

The protein resides in the nucleus. It is found in the chromosome. In terms of biological role, probable RNA-binding protein that specifically binds to the fourth chromosome and may bind an RNA that spreads the fourth chromosome. May be a reminiscence of X chromosome dosage compensation of ancestral Drosophila species in which the X and the fourth chromosomes are one single chromosome. This is Protein painting of fourth (Pof) from Drosophila melanogaster (Fruit fly).